A 960-amino-acid polypeptide reads, in one-letter code: Putative helicase L207/L206 (960 aa).

Residues 1 to 32 (MTSKTENKKSVSSKTGRTTNNSTNKKTTEKSV) form a disordered region. A compositionally biased stretch (low complexity) spans 12–25 (SSKTGRTTNNSTNK). The SF3 helicase domain maps to 646-807 (SMREYILTLL…FIKHSEATKK (162 aa)).

This is Putative helicase L207/L206 from Acanthamoeba polyphaga mimivirus (APMV).